The sequence spans 1014 residues: Valine--tRNA ligase (1014 aa).

Positions 49–59 match the 'HIGH' region motif; that stretch reads PNVTGSLHMGH. The 'KMSKS' region motif lies at 542 to 546; sequence KMSKS. Lysine 545 is a binding site for ATP. Residues 947–1014 adopt a coiled-coil conformation; the sequence is VVDIETLRAK…ILRLRLQTLV (68 aa).

Belongs to the class-I aminoacyl-tRNA synthetase family. ValS type 1 subfamily. In terms of assembly, monomer.

It is found in the cytoplasm. The catalysed reaction is tRNA(Val) + L-valine + ATP = L-valyl-tRNA(Val) + AMP + diphosphate. In terms of biological role, catalyzes the attachment of valine to tRNA(Val). As ValRS can inadvertently accommodate and process structurally similar amino acids such as threonine, to avoid such errors, it has a 'posttransfer' editing activity that hydrolyzes mischarged Thr-tRNA(Val) in a tRNA-dependent manner. In Nostoc sp. (strain PCC 7120 / SAG 25.82 / UTEX 2576), this protein is Valine--tRNA ligase.